The chain runs to 317 residues: tRNA N6-adenosine threonylcarbamoyltransferase (317 aa).

2 residues coordinate Fe cation: His-110 and His-114. Substrate contacts are provided by residues 132–136 (VVSGG), Asp-165, Gly-178, Asp-182, and Asn-271. Asp-300 contributes to the Fe cation binding site.

This sequence belongs to the KAE1 / TsaD family. The cofactor is Fe(2+).

It is found in the cytoplasm. The catalysed reaction is L-threonylcarbamoyladenylate + adenosine(37) in tRNA = N(6)-L-threonylcarbamoyladenosine(37) in tRNA + AMP + H(+). Required for the formation of a threonylcarbamoyl group on adenosine at position 37 (t(6)A37) in tRNAs that read codons beginning with adenine. Is involved in the transfer of the threonylcarbamoyl moiety of threonylcarbamoyl-AMP (TC-AMP) to the N6 group of A37, together with TsaE and TsaB. TsaD likely plays a direct catalytic role in this reaction. This is tRNA N6-adenosine threonylcarbamoyltransferase from Mesoplasma florum (strain ATCC 33453 / NBRC 100688 / NCTC 11704 / L1) (Acholeplasma florum).